The chain runs to 470 residues: Probable tocopherol cyclase, chloroplastic (470 aa).

The transit peptide at 1-61 directs the protein to the chloroplast; the sequence is MDLAAAAVAV…APTPRDRALR (61 aa). The segment at 14-48 is disordered; sequence RPAPPPRRCAPRRHRRALAPRAASSSPSPSTAVAA. The segment covering 22–31 has biased composition (basic residues); the sequence is CAPRRHRRAL. Positions 32–48 are enriched in low complexity; sequence APRAASSSPSPSTAVAA.

In terms of tissue distribution, expressed in the roots, stems, leaves and spikelets.

Its subcellular location is the plastid. The protein localises to the chloroplast. It is found in the plastoglobule. It functions in the pathway cofactor biosynthesis; tocopherol biosynthesis. Functionally, involved in the synthesis of both tocopherols and tocotrienols (vitamin E), which presumably protect photosynthetic complexes from oxidative stress. Catalyzes the conversion of 2-methyl-6-phytyl-1,4-hydroquinone and 2,3-dimethyl-5-phytyl-1,4-hydroquinone (DMPQ) to delta- and gamma-tocopherol respectively. Also converts 2,3-dimethyl-5-geranylgeranyl-1,4-hydroquinone (DMGQ) to gamma-tocotrienol. The chain is Probable tocopherol cyclase, chloroplastic (VTE1) from Oryza sativa subsp. japonica (Rice).